Consider the following 167-residue polypeptide: NADH-ubiquinone oxidoreductase chain 6 (167 aa).

5 consecutive transmembrane segments (helical) span residues Met-1 to Ala-21, Val-27 to Leu-47, Val-50 to Tyr-70, Val-88 to Gly-108, and Trp-143 to Val-163.

The protein belongs to the complex I subunit 6 family. Core subunit of respiratory chain NADH dehydrogenase (Complex I) which is composed of 45 different subunits.

The protein localises to the mitochondrion inner membrane. The enzyme catalyses a ubiquinone + NADH + 5 H(+)(in) = a ubiquinol + NAD(+) + 4 H(+)(out). Its function is as follows. Core subunit of the mitochondrial membrane respiratory chain NADH dehydrogenase (Complex I) which catalyzes electron transfer from NADH through the respiratory chain, using ubiquinone as an electron acceptor. Essential for the catalytic activity and assembly of complex I. The sequence is that of NADH-ubiquinone oxidoreductase chain 6 (MT-ND6) from Osphranter robustus (Wallaroo).